The chain runs to 327 residues: BarH-like 1 homeobox protein (327 aa).

Disordered regions lie at residues 1–90, 113–181, and 303–327; these read MEGS…AQSR, PYSS…PRKA, and LQGASEPPPPLPPLPGVLPRAAQPR. Residues 33 to 54 are compositionally biased toward low complexity; that stretch reads RSPLELSPRSESSSDCSSPASP. Over residues 79–90 the composition is skewed to polar residues; sequence QPGQLSAPAQSR. Composition is skewed to basic and acidic residues over residues 133–143 and 152–166; these read AGEDFRDKLDK and SEYKVKEEGDREISS. The segment at residues 178-237 is a DNA-binding region (homeobox); the sequence is PRKARTAFTDHQLAQLERSFERQKYLSVQDRMELAASLNLTDTQVKTWYQNRRTKWKRQT. Residues 308–318 are compositionally biased toward pro residues; sequence EPPPPLPPLPG.

The protein belongs to the BAR homeobox family.

The protein localises to the nucleus. The polypeptide is BarH-like 1 homeobox protein (Barhl1) (Mus musculus (Mouse)).